The chain runs to 431 residues: Xaa-Arg dipeptidase (431 aa).

It belongs to the peptidase M20A family.

The catalysed reaction is beta-alanyl-L-lysine + H2O = beta-alanine + L-lysine. It carries out the reaction beta-alanyl-L-arginine + H2O = beta-alanine + L-arginine. It catalyses the reaction beta-alanyl-L-ornithine + H2O = beta-alanine + L-ornithine. The enzyme catalyses N(2)-(4-aminobutanoyl)-L-lysine + H2O = 4-aminobutanoate + L-lysine. The catalysed reaction is N(2)-(4-aminobutanoyl)-L-arginine + H2O = 4-aminobutanoate + L-arginine. It carries out the reaction N(2)-(4-aminobutanoyl)-L-ornithine + H2O = 4-aminobutanoate + L-ornithine. Functionally, catalyzes the peptide bond hydrolysis in dipeptides having basic amino acids lysine, ornithine or arginine at C-terminus. Postulated to function in a metabolite repair mechanism by eliminating alternate dipeptide by-products formed during carnosine synthesis. The protein is Xaa-Arg dipeptidase of Mus musculus (Mouse).